The primary structure comprises 609 residues: Actin-interacting protein 1-2 (609 aa).

12 WD repeats span residues 2–42, 54–93, 97–141, 142–182, 185–224, 230–269, 277–318, 322–362, 445–484, 489–528, 532–571, and 576–609; these read ELSE…VTLD, EHAYPATVARYSPNGEWIASGDVSGTVRIWGAYNDHVLKN, VLAG…GEFD, GHSR…FKLS, EHSNFVNCVRFAPDGSKFITVSSDKKGIIYDGKTCEILGE, GHKGSIYAVSWSPDGKQVLTVSADKSAKIWDISDNGSGSL, GSSG…KSPF, GHMK…CGKL, NLGFIVTALAVTPDGTEAVIGGQDGKLHLYSINGDSLTEE, RHRGAISVIRYSPDLSMFASADLNREAVVWDRVSREMKLK, YHSARINCLAWSPNSTMVATGSLDTCVIVYEVDKPASSRM, and AHLGGVYGLGFADDSHVVSSGEDACIRVWSFTPQ.

In terms of tissue distribution, expressed in leaves, stems, flower buds and flowers.

Its function is as follows. Binds actin. Enhances the F-actin depolymerization activity of actin-depolymerizing factor (ADF) proteins. The polypeptide is Actin-interacting protein 1-2 (Arabidopsis thaliana (Mouse-ear cress)).